A 249-amino-acid chain; its full sequence is tRNA pseudouridine synthase A (249 aa).

The active-site Nucleophile is Asp-54. Tyr-112 is a binding site for substrate.

This sequence belongs to the tRNA pseudouridine synthase TruA family. Homodimer.

The catalysed reaction is uridine(38/39/40) in tRNA = pseudouridine(38/39/40) in tRNA. In terms of biological role, formation of pseudouridine at positions 38, 39 and 40 in the anticodon stem and loop of transfer RNAs. In Latilactobacillus sakei subsp. sakei (strain 23K) (Lactobacillus sakei subsp. sakei), this protein is tRNA pseudouridine synthase A.